The following is a 184-amino-acid chain: NADH-quinone oxidoreductase subunit B (184 aa).

4 residues coordinate [4Fe-4S] cluster: Cys-37, Cys-38, Cys-103, and Cys-132.

This sequence belongs to the complex I 20 kDa subunit family. As to quaternary structure, NDH-1 is composed of 14 different subunits. Subunits NuoB, C, D, E, F, and G constitute the peripheral sector of the complex. The cofactor is [4Fe-4S] cluster.

The protein localises to the cell membrane. The catalysed reaction is a quinone + NADH + 5 H(+)(in) = a quinol + NAD(+) + 4 H(+)(out). Functionally, NDH-1 shuttles electrons from NADH, via FMN and iron-sulfur (Fe-S) centers, to quinones in the respiratory chain. The immediate electron acceptor for the enzyme in this species is believed to be a menaquinone. Couples the redox reaction to proton translocation (for every two electrons transferred, four hydrogen ions are translocated across the cytoplasmic membrane), and thus conserves the redox energy in a proton gradient. In Rhodococcus erythropolis (strain PR4 / NBRC 100887), this protein is NADH-quinone oxidoreductase subunit B.